The primary structure comprises 139 residues: MRIMGLDVGSKTVGVAISDPLGFTAQGLEIIPIDEEKGEFGLERLTELVEQYKVDKFVVGLPKNMNNTSGPRVEASQAYGDLLTERYKLPVDYQDERLTTVAAERMLIEQADISRGKRKKVIDKLAAQLILQNYLDRTF.

The protein belongs to the YqgF nuclease family.

The protein resides in the cytoplasm. Its function is as follows. Could be a nuclease involved in processing of the 5'-end of pre-16S rRNA. This Streptococcus suis (strain 98HAH33) protein is Putative pre-16S rRNA nuclease.